Consider the following 517-residue polypeptide: Nectin-1 (517 aa).

Residues 1–30 (MARMGLAGAAGRWWGLALGLTAFFLPGVHS) form the signal peptide. An Ig-like V-type domain is found at 31–141 (QVVQVNDSMY…GNRESQLNLT (111 aa)). The Extracellular portion of the chain corresponds to 31-355 (QVVQVNDSMY…GRRAGPVPTA (325 aa)). Residues Asn36, Asn72, and Asn139 are each glycosylated (N-linked (GlcNAc...) asparagine). Cys51 and Cys124 form a disulfide bridge. Ig-like C2-type domains follow at residues 149–238 (WIEG…FKES) and 247–334 (PEVT…VNIT). Intrachain disulfides connect Cys172–Cys226 and Cys269–Cys316. An N-linked (GlcNAc...) (complex) asparagine glycan is attached at Asn202. The interaction with FGFR stretch occupies residues 282-299 (WTTLNGSLPKGVEAQNRT). N-linked (GlcNAc...) asparagine glycosylation is found at Asn286, Asn297, Asn307, and Asn332. The chain crosses the membrane as a helical span at residues 356–376 (IIGGVAGSILLVLIVVGGIVV). At 377 to 517 (ALRRRRHTFK…SFISKKEWYV (141 aa)) the chain is on the cytoplasmic side. The interval 399-488 (GYSKAGIPQH…DGYGDRTLGY (90 aa)) is disordered. A phosphoserine mark is found at Ser422, Ser434, and Ser435. Residue Tyr436 is modified to Phosphotyrosine. Residues 436–445 (YEEEEEEEEG) are compositionally biased toward acidic residues. Residues 449-466 (GERKVGGPHPKYDEDAKR) show a composition bias toward basic and acidic residues. The residue at position 511 (Ser511) is a Phosphoserine.

Belongs to the nectin family. Cis- and trans-homodimer. Can form trans-heterodimers with NECTIN3 and with NECTIN4. Interaction between NECTIN1 and NECTIN3 on the pre- and postsynaptic sites, respectively, initiates the formation of puncta adherentia junctions between axons and dendrites. Interacts (via cytoplasmic domain) with AFDN (via PDZ domain); this interaction recruits NECTIN1 to cadherin-based adherens junctions and provides a connection with the actin cytoskeleton. Interacts with integrin alphaV/beta3. Interacts (via Ig-like C2-type domain 2) with FGFR1, FGFR2 and FGFR3. As to quaternary structure, (Microbial infection) Interacts with herpes simplex virus 1/HHV-1, herpes simplex virus 2/HHV-2, and pseudorabies virus/PRV envelope glycoprotein D. (Microbial infection) Ubiquitinated by CBL following infection by herpes simplex virus 1/HHV-1 and association with HHV-1 envelope glycoprotein D, leading to its removal from cell surface.

It localises to the cell membrane. Its subcellular location is the cell junction. The protein localises to the adherens junction. It is found in the presynaptic cell membrane. The protein resides in the secreted. Cell adhesion molecule that promotes cell-cell contacts and plays important roles in the development of the nervous system. Acts by forming homophilic or heterophilic trans-dimers. Heterophilic interactions have been detected between NECTIN1 and NECTIN3 and between NECTIN1 and NECTIN4. Involved in axon guidance by promoting contacts between the commissural axons and the floor plate cells. Involved in synaptogegesis. Has some neurite outgrowth-promoting activity. Promotes formation of checkerboard-like cellular pattern of hair cells and supporting cells in the auditory epithelium via heterophilic interaction with NECTIN3: NECTIN1 is present in the membrane of hair cells and associates with NECTIN3 on supporting cells, thereby mediating heterotypic adhesion between these two cell types. Required for enamel mineralization. Functionally, (Microbial infection) Acts as a receptor for herpes simplex virus 1/HHV-1, herpes simplex virus 2/HHV-2, and pseudorabies virus/PRV. Constitutes the major receptor for herpes simplex virus 1/HHV-1 entry into host cells. The polypeptide is Nectin-1 (Homo sapiens (Human)).